A 537-amino-acid polypeptide reads, in one-letter code: CTP synthase (537 aa).

The tract at residues 1–268 (MPAKFIFVTG…DSIVVERLKL (268 aa)) is amidoligase domain. Ser14 is a CTP binding site. Ser14 serves as a coordination point for UTP. 15 to 20 (SLGKGI) serves as a coordination point for ATP. Position 55 (Tyr55) interacts with L-glutamine. Asp72 is an ATP binding site. Mg(2+) contacts are provided by Asp72 and Glu142. CTP contacts are provided by residues 149–151 (DIE), 189–194 (KTKPTQ), and Lys225. UTP contacts are provided by residues 189–194 (KTKPTQ) and Lys225. In terms of domain architecture, Glutamine amidotransferase type-1 spans 293 to 534 (EIALVGKYVT…IGAACRRAGG (242 aa)). An L-glutamine-binding site is contributed by Gly354. Cys381 serves as the catalytic Nucleophile; for glutamine hydrolysis. L-glutamine contacts are provided by residues 382-385 (LGMQ), Glu405, and Arg462. Catalysis depends on residues His507 and Glu509.

This sequence belongs to the CTP synthase family. In terms of assembly, homotetramer.

The catalysed reaction is UTP + L-glutamine + ATP + H2O = CTP + L-glutamate + ADP + phosphate + 2 H(+). It carries out the reaction L-glutamine + H2O = L-glutamate + NH4(+). The enzyme catalyses UTP + NH4(+) + ATP = CTP + ADP + phosphate + 2 H(+). It participates in pyrimidine metabolism; CTP biosynthesis via de novo pathway; CTP from UDP: step 2/2. Allosterically activated by GTP, when glutamine is the substrate; GTP has no effect on the reaction when ammonia is the substrate. The allosteric effector GTP functions by stabilizing the protein conformation that binds the tetrahedral intermediate(s) formed during glutamine hydrolysis. Inhibited by the product CTP, via allosteric rather than competitive inhibition. In terms of biological role, catalyzes the ATP-dependent amination of UTP to CTP with either L-glutamine or ammonia as the source of nitrogen. Regulates intracellular CTP levels through interactions with the four ribonucleotide triphosphates. The protein is CTP synthase of Moorella thermoacetica (strain ATCC 39073 / JCM 9320).